We begin with the raw amino-acid sequence, 914 residues long: Protein ECT2 (914 aa).

Alanine 2 is modified (N-acetylalanine). 2 consecutive BRCT domains span residues 171–260 and 266–354; these read LYCT…AAVD and FKVP…MYLY. Threonine 359 is modified (phosphothreonine; by PKC/PRKCI). Phosphoserine is present on residues serine 367 and serine 370. A Phosphothreonine; by CDK1 modification is found at threonine 373. Serine 376 bears the Phosphoserine mark. 2 consecutive short sequence motifs (nuclear localization signal) follow at residues 378–382 and 401–405; these read RKRRR and PRKRP. Positions 388–449 are disordered; sequence AQLSRETDVS…SKSSTPVPSK (62 aa). The segment covering 418–429 has biased composition (polar residues); it reads DISNTPESSINY. Low complexity predominate over residues 432–449; sequence TPKSCTKSSKSSTPVPSK. Position 444 is a phosphothreonine; by CDK1 (threonine 444). The DH domain maps to 452 to 641; it reads ARWQVAKELY…KEVMTHINED (190 aa). A Glycyl lysine isopeptide (Lys-Gly) (interchain with G-Cter in SUMO2) cross-link involves residue lysine 611. The 120-residue stretch at 675-794 folds into the PH domain; that stretch reads RVETISLGEH…KMLCRHVANT (120 aa). Serine 716 and serine 842 each carry phosphoserine. Threonine 846 carries the phosphothreonine; by CDK1 modification. The tract at residues 857-884 is disordered; it reads TSHGSVEGRSPSSNDKHVMSRLSSTSSL. Phosphoserine occurs at positions 861 and 866.

Homodimer. Homooligomer. Found in the centralspindlin complex. Interacts with NR1I3. Interacts (Thr-359 phosphorylated form) with PARD6A; the interaction is observed in cancer cells. Interacts (Thr-359 phosphorylated form) with PRKCI; the interaction is observed in cancer cells. Interacts with PKP4; the interaction is observed at the midbody. Interacts with RACGAP1/CYK4; the interaction is direct, occurs in a microtubule-dependent manner, occurs at anaphase and during cytokinesis, is inhibited in metaphase by phosphorylation of ECT2 on Thr-373 and is stimulated in early anaphase by dephosphorylation of ECT2 probably on Thr-373 through CDK1 activity. Interacts with PLK1; the interaction is stimulated upon its phosphorylation on Thr-444. Interacts with RHOA; the interaction results in allosteric activation of ECT2. Interacts with KIF23, PARD3, PARD6B and PRKCQ. Interacts with NEDD9/HEF1. In terms of processing, phosphorylated by PLK1 in vitro. Hyperphosphorylated during the G2 phase of the cell cycle. Phosphorylation at Thr-373 occurs during the G2/M phase, relieves its auto-inhibition status and stimulates its GEF activity. Phosphorylation at Thr-444 in G2/M phase is required for subsequent binding with PLK1 and Rho exchange activation. Dephosphorylated at the time of cytokinesis. Phosphorylation at Thr-359 is required for its transformation activity in cancer cells. Expressed in lung epithelial cells (at protein level). Expressed in squamous cell carcinoma, primary non-small cell lung cancer tumors and lung adenocarcinoma.

The protein resides in the nucleus. It localises to the cytoplasm. The protein localises to the cytoskeleton. It is found in the spindle. Its subcellular location is the cleavage furrow. The protein resides in the midbody. It localises to the cell junction. The protein localises to the tight junction. It is found in the microtubule organizing center. Its subcellular location is the centrosome. With respect to regulation, autoinhibited by the C-terminal PH domain which folds back and binds to the surface of the DH domain, blocking binding of RHOA to the catalytic center of the DH domain. The 2nd BRCT domain is also involved in inhibition, probably by helping to impede RHOA binding. Allosterically activated by binding of activated GTP-bound RHOA to the PH domain which stimulates the release of PH inhibition and promotes the binding of substrate RHOA to the catalytic center. Binding of phosphorylated RACGAP1 to the N-terminal BRCT domain-containing region also releases autoinhibition. Its function is as follows. Guanine nucleotide exchange factor (GEF) that catalyzes the exchange of GDP for GTP. Promotes guanine nucleotide exchange on the Rho family members of small GTPases, like RHOA, RHOC, RAC1 and CDC42. Required for signal transduction pathways involved in the regulation of cytokinesis. Component of the centralspindlin complex that serves as a microtubule-dependent and Rho-mediated signaling required for the myosin contractile ring formation during the cell cycle cytokinesis. Regulates the translocation of RHOA from the central spindle to the equatorial region. Plays a role in the control of mitotic spindle assembly; regulates the activation of CDC42 in metaphase for the process of spindle fibers attachment to kinetochores before chromosome congression. Involved in the regulation of epithelial cell polarity; participates in the formation of epithelial tight junctions in a polarity complex PARD3-PARD6-protein kinase PRKCQ-dependent manner. Plays a role in the regulation of neurite outgrowth. Inhibits phenobarbital (PB)-induced NR1I3 nuclear translocation. Stimulates the activity of RAC1 through its association with the oncogenic PARD6A-PRKCI complex in cancer cells, thereby acting to coordinately drive tumor cell proliferation and invasion. Also stimulates genotoxic stress-induced RHOB activity in breast cancer cells leading to their cell death. The chain is Protein ECT2 from Homo sapiens (Human).